The sequence spans 213 residues: ATP synthase subunit delta 2 (213 aa).

Belongs to the ATPase delta chain family. As to quaternary structure, F-type ATPases have 2 components, F(1) - the catalytic core - and F(0) - the membrane proton channel. F(1) has five subunits: alpha(3), beta(3), gamma(1), delta(1), epsilon(1). F(0) has three main subunits: a(1), b(2) and c(10-14). The alpha and beta chains form an alternating ring which encloses part of the gamma chain. F(1) is attached to F(0) by a central stalk formed by the gamma and epsilon chains, while a peripheral stalk is formed by the delta and b chains.

The protein resides in the cell inner membrane. In terms of biological role, f(1)F(0) ATP synthase produces ATP from ADP in the presence of a proton or sodium gradient. F-type ATPases consist of two structural domains, F(1) containing the extramembraneous catalytic core and F(0) containing the membrane proton channel, linked together by a central stalk and a peripheral stalk. During catalysis, ATP synthesis in the catalytic domain of F(1) is coupled via a rotary mechanism of the central stalk subunits to proton translocation. Functionally, this protein is part of the stalk that links CF(0) to CF(1). It either transmits conformational changes from CF(0) to CF(1) or is implicated in proton conduction. This Brachyspira hyodysenteriae (strain ATCC 49526 / WA1) protein is ATP synthase subunit delta 2.